The primary structure comprises 275 residues: Methylthioribulose-1-phosphate dehydratase (275 aa).

Cys125 serves as a coordination point for substrate. Zn(2+) is bound by residues His143 and His145. The active-site Proton donor/acceptor is the Glu168. His233 is a Zn(2+) binding site.

This sequence belongs to the aldolase class II family. MtnB subfamily. The cofactor is Zn(2+).

Its subcellular location is the cytoplasm. It catalyses the reaction 5-(methylsulfanyl)-D-ribulose 1-phosphate = 5-methylsulfanyl-2,3-dioxopentyl phosphate + H2O. It functions in the pathway amino-acid biosynthesis; L-methionine biosynthesis via salvage pathway; L-methionine from S-methyl-5-thio-alpha-D-ribose 1-phosphate: step 2/6. Catalyzes the dehydration of methylthioribulose-1-phosphate (MTRu-1-P) into 2,3-diketo-5-methylthiopentyl-1-phosphate (DK-MTP-1-P). The chain is Methylthioribulose-1-phosphate dehydratase from Lodderomyces elongisporus (strain ATCC 11503 / CBS 2605 / JCM 1781 / NBRC 1676 / NRRL YB-4239) (Yeast).